Consider the following 382-residue polypeptide: PPE family protein PPE44 (382 aa).

Belongs to the mycobacterial PPE family.

The protein resides in the secreted. It is found in the cell wall. The protein localises to the cell surface. Functionally, virulence factor that modulates host innate immune response. This chain is PPE family protein PPE44, found in Mycobacterium tuberculosis (strain CDC 1551 / Oshkosh).